A 216-amino-acid chain; its full sequence is Adenylate kinase (216 aa).

10–15 (GAGKGT) lines the ATP pocket. The NMP stretch occupies residues 30–59 (STGDIFRKNISENTPLGIEAKGYIDNGQLV). AMP contacts are provided by residues Thr-31, Arg-36, 57–59 (QLV), 85–88 (GFPR), and Gln-92. The segment at 126–163 (GRRVCPSCGASYHVKFNPPTNEGKCDLCGSEVIQRKDD) is LID. Arg-127 contributes to the ATP binding site. Zn(2+)-binding residues include Cys-130 and Cys-133. Position 136–137 (136–137 (SY)) interacts with ATP. Zn(2+)-binding residues include Cys-150 and Cys-153. Residues Arg-160 and Arg-171 each contribute to the AMP site. Position 199 (Lys-199) interacts with ATP.

The protein belongs to the adenylate kinase family. In terms of assembly, monomer.

Its subcellular location is the cytoplasm. The enzyme catalyses AMP + ATP = 2 ADP. The protein operates within purine metabolism; AMP biosynthesis via salvage pathway; AMP from ADP: step 1/1. Catalyzes the reversible transfer of the terminal phosphate group between ATP and AMP. Plays an important role in cellular energy homeostasis and in adenine nucleotide metabolism. In Clostridium beijerinckii (strain ATCC 51743 / NCIMB 8052) (Clostridium acetobutylicum), this protein is Adenylate kinase.